The following is a 487-amino-acid chain: Siroheme synthase (487 aa).

The segment at 1 to 203 is precorrin-2 dehydrogenase /sirohydrochlorin ferrochelatase; the sequence is MNTFPLFFKL…GRSVEAEQAL (203 aa). NAD(+) is bound by residues 22-23 and 43-44; these read EV and PQ. Ser128 is subject to Phosphoserine. The uroporphyrinogen-III C-methyltransferase stretch occupies residues 229-487; it reads GEVYIVGAGP…DQQAHALNML (259 aa). Pro238 is an S-adenosyl-L-methionine binding site. The active-site Proton acceptor is Asp261. Lys283 serves as the catalytic Proton donor. S-adenosyl-L-methionine-binding positions include 314–316, Val319, 344–345, Met396, and Ala425; these read GGD and TA.

This sequence in the N-terminal section; belongs to the precorrin-2 dehydrogenase / sirohydrochlorin ferrochelatase family. In the C-terminal section; belongs to the precorrin methyltransferase family.

It catalyses the reaction uroporphyrinogen III + 2 S-adenosyl-L-methionine = precorrin-2 + 2 S-adenosyl-L-homocysteine + H(+). It carries out the reaction precorrin-2 + NAD(+) = sirohydrochlorin + NADH + 2 H(+). The catalysed reaction is siroheme + 2 H(+) = sirohydrochlorin + Fe(2+). The protein operates within cofactor biosynthesis; adenosylcobalamin biosynthesis; precorrin-2 from uroporphyrinogen III: step 1/1. It participates in cofactor biosynthesis; adenosylcobalamin biosynthesis; sirohydrochlorin from precorrin-2: step 1/1. Its pathway is porphyrin-containing compound metabolism; siroheme biosynthesis; precorrin-2 from uroporphyrinogen III: step 1/1. It functions in the pathway porphyrin-containing compound metabolism; siroheme biosynthesis; siroheme from sirohydrochlorin: step 1/1. The protein operates within porphyrin-containing compound metabolism; siroheme biosynthesis; sirohydrochlorin from precorrin-2: step 1/1. Its function is as follows. Multifunctional enzyme that catalyzes the SAM-dependent methylations of uroporphyrinogen III at position C-2 and C-7 to form precorrin-2 via precorrin-1. Then it catalyzes the NAD-dependent ring dehydrogenation of precorrin-2 to yield sirohydrochlorin. Finally, it catalyzes the ferrochelation of sirohydrochlorin to yield siroheme. The sequence is that of Siroheme synthase from Psychrobacter sp. (strain PRwf-1).